A 238-amino-acid chain; its full sequence is MGIDELYKKEFGIVAGVDEAGRGCLAGPVVAAAVVLEKEIEGINDSKQLSPAKRERLLDEIMEKAAVGIGIASPEEIDLYNIFNATKLAMNRALENLSVKPSFVLVDGKGIELSVPGTCLVKGDQKSKLIGAASIVAKVFRDRLMSEFHRMYPQFSFHKHKGYATKEHLNEIRKNGVLPIHRLSFEPVLELLTDDLLREFFEKGLISENRFERILNLLGARKSVVFRKERTNHNLPLF.

Residues 12–197 enclose the RNase H type-2 domain; it reads GIVAGVDEAG…VLELLTDDLL (186 aa). Residues D18, E19, and D107 each contribute to the a divalent metal cation site.

This sequence belongs to the RNase HII family. The cofactor is Mn(2+). Requires Mg(2+) as cofactor.

It localises to the cytoplasm. The catalysed reaction is Endonucleolytic cleavage to 5'-phosphomonoester.. Functionally, endonuclease that specifically degrades the RNA of RNA-DNA hybrids. In Thermotoga maritima (strain ATCC 43589 / DSM 3109 / JCM 10099 / NBRC 100826 / MSB8), this protein is Ribonuclease HII (rnhB).